Here is a 148-residue protein sequence, read N- to C-terminus: uncharacterized protein (148 aa).

Residues 1–17 (MCPPVRQRPAQAPPAKR) are compositionally biased toward low complexity. Disordered regions lie at residues 1–86 (MCPP…VQSP) and 122–148 (RAHRLPQPKPPCQSRQRPSPDSQTSPC). Residues 38-57 (RPPKMQRRPRPPVAKRRRFP) are compositionally biased toward basic residues. The span at 134 to 148 (QSRQRPSPDSQTSPC) shows a compositional bias: polar residues.

The protein belongs to the Epstein-Barr virus BLLF2 family.

This is an uncharacterized protein from Homo sapiens (Human).